Here is a 113-residue protein sequence, read N- to C-terminus: Large ribosomal subunit protein P2 (113 aa).

The segment at 62–113 is disordered; sequence LASVPSGGAGGAAASGGAAAAGGSAQAEAAPEAAKEEEKEESDEDMGFGLFD. Low complexity predominate over residues 76–93; sequence SGGAAAAGGSAQAEAAPE. The residue at position 103 (serine 103) is a Phosphoserine.

This sequence belongs to the eukaryotic ribosomal protein P1/P2 family. P1 and P2 exist as dimers at the large ribosomal subunit.

Functionally, plays an important role in the elongation step of protein synthesis. In Alternaria alternata (Alternaria rot fungus), this protein is Large ribosomal subunit protein P2 (ALTA5).